The following is a 337-amino-acid chain: Ferredoxin--NADP reductase (337 aa).

FAD contacts are provided by glutamate 42, glutamine 50, tyrosine 55, valine 97, phenylalanine 130, aspartate 292, and threonine 333.

The protein belongs to the ferredoxin--NADP reductase type 2 family. Homodimer. FAD serves as cofactor.

The catalysed reaction is 2 reduced [2Fe-2S]-[ferredoxin] + NADP(+) + H(+) = 2 oxidized [2Fe-2S]-[ferredoxin] + NADPH. The polypeptide is Ferredoxin--NADP reductase (Streptococcus mutans serotype c (strain ATCC 700610 / UA159)).